The chain runs to 174 residues: Large ribosomal subunit protein bL12cz (174 aa).

The transit peptide at 1-45 (MASTTFSSAFSILSLPSSSPSPPPSPPRTLPVANRRRRAAAVAST) directs the protein to the chloroplast. The tract at residues 1–46 (MASTTFSSAFSILSLPSSSPSPPPSPPRTLPVANRRRRAAAVASTA) is disordered. Residues 7–18 (SSAFSILSLPSS) show a composition bias toward low complexity. Pro residues predominate over residues 19-29 (SPSPPPSPPRT).

This sequence belongs to the bacterial ribosomal protein bL12 family.

It is found in the plastid. The protein resides in the chloroplast. The polypeptide is Large ribosomal subunit protein bL12cz (RPL12-1) (Secale cereale (Rye)).